Reading from the N-terminus, the 107-residue chain is Ferredoxin 1 (107 aa).

4Fe-4S ferredoxin-type domains are found at residues 2 to 30 (TFVV…YEGP) and 31 to 60 (NFLV…SEDE). Cysteine 9 and cysteine 17 together coordinate [3Fe-4S] cluster. 4 residues coordinate [4Fe-4S] cluster: cysteine 21, cysteine 40, cysteine 43, and cysteine 46. Cysteine 50 contacts [3Fe-4S] cluster.

It depends on [4Fe-4S] cluster as a cofactor. [3Fe-4S] cluster serves as cofactor.

In terms of biological role, ferredoxins are iron-sulfur proteins that transfer electrons in a wide variety of metabolic reactions. The sequence is that of Ferredoxin 1 (fdxA) from Pseudomonas aeruginosa (strain ATCC 15692 / DSM 22644 / CIP 104116 / JCM 14847 / LMG 12228 / 1C / PRS 101 / PAO1).